Reading from the N-terminus, the 331-residue chain is Phosphate acyltransferase (331 aa).

It belongs to the PlsX family. Homodimer. Probably interacts with PlsY.

It is found in the cytoplasm. The enzyme catalyses a fatty acyl-[ACP] + phosphate = an acyl phosphate + holo-[ACP]. The protein operates within lipid metabolism; phospholipid metabolism. Functionally, catalyzes the reversible formation of acyl-phosphate (acyl-PO(4)) from acyl-[acyl-carrier-protein] (acyl-ACP). This enzyme utilizes acyl-ACP as fatty acyl donor, but not acyl-CoA. This Lactococcus lactis subsp. lactis (strain IL1403) (Streptococcus lactis) protein is Phosphate acyltransferase.